The sequence spans 544 residues: Chaperonin GroEL (544 aa).

Residues 29 to 32 (TLGP), 86 to 90 (DGTTT), Gly-413, 476 to 478 (NAA), and Asp-492 each bind ATP.

It belongs to the chaperonin (HSP60) family. In terms of assembly, forms a cylinder of 14 subunits composed of two heptameric rings stacked back-to-back. Interacts with the co-chaperonin GroES.

The protein resides in the cytoplasm. The enzyme catalyses ATP + H2O + a folded polypeptide = ADP + phosphate + an unfolded polypeptide.. In terms of biological role, together with its co-chaperonin GroES, plays an essential role in assisting protein folding. The GroEL-GroES system forms a nano-cage that allows encapsulation of the non-native substrate proteins and provides a physical environment optimized to promote and accelerate protein folding. This chain is Chaperonin GroEL, found in Bacillus pumilus (strain SAFR-032).